The primary structure comprises 407 residues: Multifunctional CCA protein (407 aa).

Positions 8 and 11 each coordinate ATP. CTP-binding residues include glycine 8 and arginine 11. Residues aspartate 21 and aspartate 23 each coordinate Mg(2+). ATP-binding residues include arginine 91, arginine 137, and arginine 140. Residues arginine 91, arginine 137, and arginine 140 each contribute to the CTP site. The HD domain occupies cysteine 225 to leucine 326.

It belongs to the tRNA nucleotidyltransferase/poly(A) polymerase family. Bacterial CCA-adding enzyme type 1 subfamily. As to quaternary structure, monomer. Can also form homodimers and oligomers. Requires Mg(2+) as cofactor. Ni(2+) serves as cofactor.

It carries out the reaction a tRNA precursor + 2 CTP + ATP = a tRNA with a 3' CCA end + 3 diphosphate. It catalyses the reaction a tRNA with a 3' CCA end + 2 CTP + ATP = a tRNA with a 3' CCACCA end + 3 diphosphate. Functionally, catalyzes the addition and repair of the essential 3'-terminal CCA sequence in tRNAs without using a nucleic acid template. Adds these three nucleotides in the order of C, C, and A to the tRNA nucleotide-73, using CTP and ATP as substrates and producing inorganic pyrophosphate. tRNA 3'-terminal CCA addition is required both for tRNA processing and repair. Also involved in tRNA surveillance by mediating tandem CCA addition to generate a CCACCA at the 3' terminus of unstable tRNAs. While stable tRNAs receive only 3'-terminal CCA, unstable tRNAs are marked with CCACCA and rapidly degraded. The polypeptide is Multifunctional CCA protein (Chromobacterium violaceum (strain ATCC 12472 / DSM 30191 / JCM 1249 / CCUG 213 / NBRC 12614 / NCIMB 9131 / NCTC 9757 / MK)).